A 545-amino-acid chain; its full sequence is CTP synthase (545 aa).

The interval 1-266 is amidoligase domain; the sequence is MTTNYIFVTG…DDYICKRFSL (266 aa). Serine 14 provides a ligand contact to CTP. Serine 14 is a binding site for UTP. Residues 15 to 20 and aspartate 72 contribute to the ATP site; that span reads SLGKGI. The Mg(2+) site is built by aspartate 72 and glutamate 140. Residues 147–149, 187–192, and lysine 223 contribute to the CTP site; these read DIE and KTKPTQ. Residues 187–192 and lysine 223 each bind UTP; that span reads KTKPTQ. 239-241 is an ATP binding site; the sequence is KDV. The region spanning 291 to 542 is the Glutamine amidotransferase type-1 domain; that stretch reads TIGMIGKYVE…VKAAGDYQKR (252 aa). Glycine 352 provides a ligand contact to L-glutamine. The Nucleophile; for glutamine hydrolysis role is filled by cysteine 379. L-glutamine contacts are provided by residues 380 to 383, glutamate 403, and arginine 470; that span reads LGMQ. Residues histidine 515 and glutamate 517 contribute to the active site.

It belongs to the CTP synthase family. As to quaternary structure, homotetramer.

It catalyses the reaction UTP + L-glutamine + ATP + H2O = CTP + L-glutamate + ADP + phosphate + 2 H(+). It carries out the reaction L-glutamine + H2O = L-glutamate + NH4(+). The enzyme catalyses UTP + NH4(+) + ATP = CTP + ADP + phosphate + 2 H(+). It participates in pyrimidine metabolism; CTP biosynthesis via de novo pathway; CTP from UDP: step 2/2. With respect to regulation, allosterically activated by GTP, when glutamine is the substrate; GTP has no effect on the reaction when ammonia is the substrate. The allosteric effector GTP functions by stabilizing the protein conformation that binds the tetrahedral intermediate(s) formed during glutamine hydrolysis. Inhibited by the product CTP, via allosteric rather than competitive inhibition. Catalyzes the ATP-dependent amination of UTP to CTP with either L-glutamine or ammonia as the source of nitrogen. Regulates intracellular CTP levels through interactions with the four ribonucleotide triphosphates. This Yersinia pseudotuberculosis serotype O:1b (strain IP 31758) protein is CTP synthase.